Consider the following 263-residue polypeptide: uncharacterized protein (263 aa).

Gly-17 to Ser-41 provides a ligand contact to NAD(+). Ser-147 lines the substrate pocket. Catalysis depends on Tyr-160, which acts as the Proton acceptor. Lys-164 serves as a coordination point for NAD(+).

It belongs to the short-chain dehydrogenases/reductases (SDR) family.

This is an uncharacterized protein from Mycobacterium tuberculosis (strain CDC 1551 / Oshkosh).